A 141-amino-acid polypeptide reads, in one-letter code: Perlwapin-like protein (141 aa).

The signal sequence occupies residues 1 to 19 (MNVYFILFLGVFAFIEVNC). The WAP domain occupies 23 to 71 (KSKSLGTCPKLDVSTVCVVDYKFNCLFQKQCPSGYRCCTYGCNRRCAAV). Intrachain disulfides connect cysteine 30/cysteine 60, cysteine 39/cysteine 64, cysteine 47/cysteine 59, cysteine 53/cysteine 68, cysteine 81/cysteine 105, and cysteine 92/cysteine 104.

In terms of tissue distribution, component of the organic matrix of calcified shell layers like nacre and prisms.

The protein resides in the secreted. This is Perlwapin-like protein from Mytilus galloprovincialis (Mediterranean mussel).